We begin with the raw amino-acid sequence, 544 residues long: MNPKQLIFHDDARDKIRRGVDTLAQAVKVTLGPRGRTVILERDFGSPQIVNSGVLVAKSIELEDRFENMGAQLLREVAARTSEMAGDGTTTATVLAHSMILEGLRYLAGGMNPMDLKRGIEIAIDAVVAELKQLSRPCASSQEIAHVAAISANNDRSIGDLLASAIDKVGREGAISIEDGSGLVSVLDVVEGLQFDRGFLSPYFINNAERQSAVLEDVAILLCEGRLSSLKDLLPLLEEIVKEGRPLLVIAEEVDNDSLAALVINTIRGTLKTCAVKAPGFGDRRKAMVQDIAVLTGGSVVSDEVGLTLGKVKLSDLGRATRAEITKETTTLIGGAGQPKAIKERIATIRKERELASSDYDRDKLDERAAKLAGGVALIKVGAATETELKERKIRVEDALHATRAAVEEGIVPGGGVALLRARRALLTLTGSTLDETSGIRLVARSLEEPLRCIVSNAGDEPSVILNRVDESPDPAFGYNAATRTYGDLLQMGVIDPAKVTRLALQNAASIASLILGTACLIATAPKPLPEEGAHGPGGETPMF.

ATP contacts are provided by residues T30–P33, D87–T91, G415, N480–A482, and D496.

Belongs to the chaperonin (HSP60) family. As to quaternary structure, forms a cylinder of 14 subunits composed of two heptameric rings stacked back-to-back. Interacts with the co-chaperonin GroES.

Its subcellular location is the cytoplasm. The catalysed reaction is ATP + H2O + a folded polypeptide = ADP + phosphate + an unfolded polypeptide.. In terms of biological role, together with its co-chaperonin GroES, plays an essential role in assisting protein folding. The GroEL-GroES system forms a nano-cage that allows encapsulation of the non-native substrate proteins and provides a physical environment optimized to promote and accelerate protein folding. This is Chaperonin GroEL 2 from Albidiferax ferrireducens (strain ATCC BAA-621 / DSM 15236 / T118) (Rhodoferax ferrireducens).